Consider the following 483-residue polypeptide: Proline--tRNA ligase (483 aa).

The protein belongs to the class-II aminoacyl-tRNA synthetase family. ProS type 3 subfamily. As to quaternary structure, homodimer.

Its subcellular location is the cytoplasm. The enzyme catalyses tRNA(Pro) + L-proline + ATP = L-prolyl-tRNA(Pro) + AMP + diphosphate. In terms of biological role, catalyzes the attachment of proline to tRNA(Pro) in a two-step reaction: proline is first activated by ATP to form Pro-AMP and then transferred to the acceptor end of tRNA(Pro). The chain is Proline--tRNA ligase from Sulfolobus acidocaldarius (strain ATCC 33909 / DSM 639 / JCM 8929 / NBRC 15157 / NCIMB 11770).